Reading from the N-terminus, the 122-residue chain is uncharacterized protein (122 aa).

It localises to the mitochondrion. This is an uncharacterized protein from Claviceps purpurea (Ergot fungus).